We begin with the raw amino-acid sequence, 54 residues long: Defensin-like protein 1 (54 aa).

4 disulfides stabilise this stretch: C6-C54, C17-C39, C23-C48, and C27-C50.

It belongs to the DEFL family.

The protein resides in the secreted. In terms of biological role, possesses antifungal activity insensitive to inorganic cations. Causes germ tubes and hyphae to swell and form multiple hyphal buds. Binds to the plasma membrane of the fungus. Has no inhibitory effect on insect gut alpha-amylase. The polypeptide is Defensin-like protein 1 (Heuchera sanguinea (Coralbells)).